The following is a 480-amino-acid chain: RAC-alpha serine/threonine-protein kinase (480 aa).

In terms of domain architecture, PH spans 5–108; sequence AIVKEGWLHK…WATAIQTVAD (104 aa). N6-acetyllysine occurs at positions 14 and 20. 1D-myo-inositol 1,3,4,5-tetrakisphosphate is bound at residue 14 to 19; the sequence is KRGEYI. 1D-myo-inositol 1,3,4,5-tetrakisphosphate is bound by residues 23-25 and Asn53; that span reads RPR. Cys60 and Cys77 are disulfide-bonded. Arg86 is a binding site for 1D-myo-inositol 1,3,4,5-tetrakisphosphate. The disordered stretch occupies residues 114 to 137; it reads EEETMDFRSGSPSDNSGAEEMEVS. Ser124 is modified (phosphoserine). Phosphoserine; alternate is present on residues Ser126 and Ser129. O-linked (GlcNAc) serine; alternate glycosylation is found at Ser126 and Ser129. The 259-residue stretch at 150-408 folds into the Protein kinase domain; the sequence is FEYLKLLGKG…AKEIMQHRFF (259 aa). Residue 156 to 164 coordinates ATP; sequence LGKGTFGKV. Tyr176 carries the post-translational modification Phosphotyrosine; by TNK2. Lys179 lines the ATP pocket. Catalysis depends on Asp274, which acts as the Proton acceptor. Residue Lys284 forms a Glycyl lysine isopeptide (Lys-Gly) (interchain with G-Cter in ubiquitin) linkage. A disulfide bond links Cys296 and Cys310. O-linked (GlcNAc) threonine glycosylation occurs at Thr305. Position 308 is a phosphothreonine; by IKKE, PDPK1 and TBK1 (Thr308). An O-linked (GlcNAc) threonine glycan is attached at Thr312. The region spanning 409 to 480 is the AGC-kinase C-terminal domain; that stretch reads ANIVWQDVYE…QFSYSASGTA (72 aa). A Phosphothreonine modification is found at Thr448. Residue Thr450 is modified to Phosphothreonine; by MTOR. The tract at residues 450-480 is disordered; sequence TPPDQDDSMECVDSERRPHFPQFSYSASGTA. The O-linked (GlcNAc) serine; alternate glycan is linked to Ser473. Phosphoserine; by IKKE, MTOR, PRKDC and TBK1; alternate is present on Ser473. At Tyr474 the chain carries Phosphotyrosine. Residue Ser477 is modified to Phosphoserine; by CDK2 and MTOR. Residue Thr479 is modified to Phosphothreonine; by CDK2 and MTOR.

Belongs to the protein kinase superfamily. AGC Ser/Thr protein kinase family. RAC subfamily. As to quaternary structure, interacts with and phosphorylated by PDPK1. Interacts with AGAP2 (isoform 2/PIKE-A); the interaction occurs in the presence of guanine nucleotides. Interacts with AKTIP. Interacts (via PH domain) with MTCP1, TCL1A and TCL1B. Interacts with CDKN1B; the interaction phosphorylates CDKN1B promoting 14-3-3 binding and cell-cycle progression. Interacts with MAP3K5 and TRAF6. Interacts with BAD, PPP2R5B, STK3 and STK4. Interacts (via PH domain) with SIRT1. Interacts with SRPK2 in a phosphorylation-dependent manner. Interacts with TRIM13; the interaction ubiquitinates AKT1 leading to its proteasomal degradation. Interacts with RAF1. Interacts (via the C-terminus) with CCDC88A (via its C-terminus) and THEM4 (via its C-terminus). Interacts with GRB10; the interaction leads to GRB10 phosphorylation thus promoting YWHAE-binding. Interacts with KCTD20. Interacts with BTBD10. Interacts with PA2G4. Interacts with KIF14; the interaction is detected in the plasma membrane upon INS stimulation and promotes AKT1 phosphorylation. Interacts with FAM83B; activates the PI3K/AKT signaling cascade. Interacts with WDFY2 (via WD repeats 1-3). Forms a complex with WDFY2 and FOXO1. Interacts with FAM168A. Interacts with SYAP1 (via phosphorylated form and BSD domain); this interaction is enhanced in a mTORC2-mediated manner in response to epidermal growth factor (EGF) stimulation and activates AKT1. Interacts with PKHM3. Interacts with FKBP5/FKBP51; promoting interaction between Akt/AKT1 and PHLPP1, thereby enhancing dephosphorylation and subsequent activation of Akt/AKT1. Interacts with TMEM175; leading to formation of the lysoK(GF) complex. In terms of processing, O-GlcNAcylation at Thr-305 and Thr-312 inhibits activating phosphorylation at Thr-308 via disrupting the interaction between AKT1 and PDPK1. O-GlcNAcylation at Ser-473 also probably interferes with phosphorylation at this site. Post-translationally, phosphorylation on Thr-308, Ser-473 and Tyr-474 is required for full activity. Phosphorylation of the activation loop at Thr-308 by PDPK1/PDK1 is a prerequisite for full activation. Phosphorylation by mTORC2 in response to growth factors plays a key role in AKT1 activation: mTORC2 phosphorylates different sites depending on the context, such as Thr-450, Ser-473, Ser-477 or Thr-479, thereby facilitating subsequent phosphorylation of the activation loop by PDPK1/PDK1. Phosphorylation at Ser-473 by mTORC2 promotes ubiquitination and degradation by the proteasome. Also phosphorylated at Ser-477 and Thr-479 by CDK2, facilitating subsequent phosphorylation of the activation loop by PDPK1/PDK1. Activated TNK2 phosphorylates it on Tyr-176 resulting in its binding to the anionic plasma membrane phospholipid PA. This phosphorylated form localizes to the cell membrane, where it is targeted by PDPK1 and PDPK2 for further phosphorylations on Thr-308 and Ser-473 leading to its activation. Phosphorylated at Thr-308 and Ser-473 by IKBKE and TBK1. Ser-473 phosphorylation is enhanced by interaction with AGAP2 isoform 2 (PIKE-A). Ser-473 phosphorylation is enhanced by signaling through activated FLT3. Ser-473 is dephosphorylated by PHLPP. Dephosphorylated at Thr-308 and Ser-473 by PP2A phosphatase. The phosphorylated form of PPP2R5B is required for bridging AKT1 with PP2A phosphatase. Ser-473 is dephosphorylated by CPPED1, leading to termination of signaling. AIM2 acts as an inhibitor of AKT1 by inhibiting phosphorylation Ser-473: AIM2 acts both by inhibiting the activity of PRKDC/DNA-PK kinase and promoting dephosphorylation by PP2A phosphatase. Ubiquitinated; undergoes both 'Lys-48'- and 'Lys-63'-linked polyubiquitination. TRAF6-induced 'Lys-63'-linked AKT1 ubiquitination is critical for phosphorylation and activation. When ubiquitinated, it translocates to the plasma membrane, where it becomes phosphorylated. When fully phosphorylated and translocated into the nucleus, undergoes 'Lys-48'-polyubiquitination catalyzed by TTC3, leading to its degradation by the proteasome. Also ubiquitinated by TRIM13 leading to its proteasomal degradation. Ubiquitinated via 'Lys-48'-linked polyubiquitination by ZNRF1, leading to its degradation by the proteasome. Phosphorylated, undergoes 'Lys-48'-linked polyubiquitination preferentially at Lys-284 catalyzed by MUL1, leading to its proteasomal degradation. In terms of processing, acetylated on Lys-14 and Lys-20 by the histone acetyltransferases EP300 and KAT2B. Acetylation results in reduced phosphorylation and inhibition of activity. Deacetylated at Lys-14 and Lys-20 by SIRT1. SIRT1-mediated deacetylation relieves the inhibition. Post-translationally, cleavage by caspase-3/CASP3. Cleaved at the caspase-3 consensus site Asp-462 during apoptosis, resulting in down-regulation of the AKT signaling pathway and decreased cell survival. As to expression, widely expressed. Low levels found in liver with slightly higher levels present in thymus and testis.

It is found in the cytoplasm. It localises to the nucleus. The protein resides in the cell membrane. Its subcellular location is the mitochondrion intermembrane space. The catalysed reaction is L-seryl-[protein] + ATP = O-phospho-L-seryl-[protein] + ADP + H(+). It carries out the reaction L-threonyl-[protein] + ATP = O-phospho-L-threonyl-[protein] + ADP + H(+). Three specific sites, one in the kinase domain (Thr-308) and the two other ones in the C-terminal regulatory region (Ser-473 and Tyr-474), need to be phosphorylated for its full activation. Functionally, AKT1 is one of 3 closely related serine/threonine-protein kinases (AKT1, AKT2 and AKT3) called the AKT kinase, and which regulate many processes including metabolism, proliferation, cell survival, growth and angiogenesis. This is mediated through serine and/or threonine phosphorylation of a range of downstream substrates. Over 100 substrate candidates have been reported so far, but for most of them, no isoform specificity has been reported. AKT is responsible of the regulation of glucose uptake by mediating insulin-induced translocation of the SLC2A4/GLUT4 glucose transporter to the cell surface. Phosphorylation of PTPN1 at 'Ser-50' negatively modulates its phosphatase activity preventing dephosphorylation of the insulin receptor and the attenuation of insulin signaling. Phosphorylation of TBC1D4 triggers the binding of this effector to inhibitory 14-3-3 proteins, which is required for insulin-stimulated glucose transport. AKT also regulates the storage of glucose in the form of glycogen by phosphorylating GSK3A at 'Ser-21' and GSK3B at 'Ser-9', resulting in inhibition of its kinase activity. Phosphorylation of GSK3 isoforms by AKT is also thought to be one mechanism by which cell proliferation is driven. AKT also regulates cell survival via the phosphorylation of MAP3K5 (apoptosis signal-related kinase). Phosphorylation of 'Ser-83' decreases MAP3K5 kinase activity stimulated by oxidative stress and thereby prevents apoptosis. AKT mediates insulin-stimulated protein synthesis by phosphorylating TSC2 at 'Ser-939' and 'Thr-1462', thereby activating the mTORC1 signaling pathway, and leading to both phosphorylation of 4E-BP1 and in activation of RPS6KB1. Also regulates the mTORC1 signaling pathway by catalyzing phosphorylation of CASTOR1 and DEPDC5. AKT plays a role as key modulator of the AKT-mTOR signaling pathway controlling the tempo of the process of newborn neurons integration during adult neurogenesis, including correct neuron positioning, dendritic development and synapse formation. Part of a positive feedback loop of mTORC2 signaling by mediating phosphorylation of MAPKAP1/SIN1, promoting mTORC2 activation. AKT is involved in the phosphorylation of members of the FOXO factors (Forkhead family of transcription factors), leading to binding of 14-3-3 proteins and cytoplasmic localization. In particular, FOXO1 is phosphorylated at 'Thr-24', 'Ser-256' and 'Ser-319'. FOXO3 and FOXO4 are phosphorylated on equivalent sites. AKT has an important role in the regulation of NF-kappa-B-dependent gene transcription and positively regulates the activity of CREB1 (cyclic AMP (cAMP)-response element binding protein). The phosphorylation of CREB1 induces the binding of accessory proteins that are necessary for the transcription of pro-survival genes such as BCL2 and MCL1. AKT phosphorylates 'Ser-454' on ATP citrate lyase (ACLY), thereby potentially regulating ACLY activity and fatty acid synthesis. Activates the 3B isoform of cyclic nucleotide phosphodiesterase (PDE3B) via phosphorylation of 'Ser-273', resulting in reduced cyclic AMP levels and inhibition of lipolysis. Phosphorylates PIKFYVE on 'Ser-318', which results in increased PI(3)P-5 activity. The Rho GTPase-activating protein DLC1 is another substrate and its phosphorylation is implicated in the regulation cell proliferation and cell growth. Signals downstream of phosphatidylinositol 3-kinase (PI(3)K) to mediate the effects of various growth factors such as platelet-derived growth factor (PDGF), epidermal growth factor (EGF), insulin and insulin-like growth factor 1 (IGF1). AKT mediates the antiapoptotic effects of IGF1. Essential for the SPATA13-mediated regulation of cell migration and adhesion assembly and disassembly. May be involved in the regulation of the placental development. Phosphorylates STK4/MST1 at 'Thr-120' and 'Thr-387' leading to inhibition of its: kinase activity, nuclear translocation, autophosphorylation and ability to phosphorylate FOXO3. Phosphorylates STK3/MST2 at 'Thr-117' and 'Thr-384' leading to inhibition of its: cleavage, kinase activity, autophosphorylation at Thr-180, binding to RASSF1 and nuclear translocation. Phosphorylates SRPK2 and enhances its kinase activity towards SRSF2 and ACIN1 and promotes its nuclear translocation. Phosphorylates RAF1 at 'Ser-259' and negatively regulates its activity. Phosphorylation of BAD stimulates its pro-apoptotic activity. Phosphorylates KAT6A at 'Thr-369' and this phosphorylation inhibits the interaction of KAT6A with PML and negatively regulates its acetylation activity towards p53/TP53. Phosphorylates palladin (PALLD), modulating cytoskeletal organization and cell motility. Phosphorylates prohibitin (PHB), playing an important role in cell metabolism and proliferation. Phosphorylates CDKN1A, for which phosphorylation at 'Thr-145' induces its release from CDK2 and cytoplasmic relocalization. These recent findings indicate that the AKT1 isoform has a more specific role in cell motility and proliferation. Phosphorylates CLK2 thereby controlling cell survival to ionizing radiation. Phosphorylates PCK1 at 'Ser-90', reducing the binding affinity of PCK1 to oxaloacetate and changing PCK1 into an atypical protein kinase activity using GTP as donor. Also acts as an activator of TMEM175 potassium channel activity in response to growth factors: forms the lysoK(GF) complex together with TMEM175 and acts by promoting TMEM175 channel activation, independently of its protein kinase activity. Acts as a negative regulator of the cGAS-STING pathway by mediating phosphorylation of CGAS during mitosis, leading to its inhibition. Acts as a regulator of mitochondrial calcium uptake by mediating phosphorylation of MICU1 in the mitochondrial intermembrane space, impairing MICU1 maturation. Acts as an inhibitor of tRNA methylation by mediating phosphorylation of the N-terminus of METTL1, thereby inhibiting METTL1 methyltransferase activity. In response to LPAR1 receptor pathway activation, phosphorylates Rabin8/RAB3IP which alters its activity and phosphorylates WDR44 which induces WDR44 binding to Rab11, thereby switching Rab11 vesicular function from preciliary trafficking to endocytic recycling. The chain is RAC-alpha serine/threonine-protein kinase (Akt1) from Mus musculus (Mouse).